A 267-amino-acid chain; its full sequence is Chaperone protein MyfB (267 aa).

The N-terminal stretch at M1–G34 is a signal peptide. C127 and C164 form a disulfide bridge.

This sequence belongs to the periplasmic pilus chaperone family.

The protein localises to the periplasm. Functionally, required for the biogenesis of the MyfA fimbria. In Yersinia enterocolitica, this protein is Chaperone protein MyfB (myfB).